Reading from the N-terminus, the 283-residue chain is MPKYALVINEDKPMAVTTGEEILQRLEASGAAVLLHPAAAGRLGRPDLAAPEGPAWGEVDMLIVLGGDGTLIRAVQRVAPYGVPVLGINTGHLGFLTAMESGDALAELDRVLAGSYLLEERMMLEATVVRDGLALATMPALNDAVISKGPRARMVHLEVSVGETVVARYRADGVIVATPTGSTAYSLSAGGPVVEPTVDCLLVTPICPHTMSARSIVVGADVALAIRVAASPGEVGLSADGSDPFPLLPGDVVRVGRAPYTARLVRLPGYRFYDVLRQKLSGT.

The active-site Proton acceptor is the Asp-68. NAD(+)-binding positions include 68–69 (DG), Arg-73, 142–143 (ND), Arg-153, Arg-170, Asp-172, and 183–188 (TAYSLS).

Belongs to the NAD kinase family. A divalent metal cation serves as cofactor.

It localises to the cytoplasm. It catalyses the reaction NAD(+) + ATP = ADP + NADP(+) + H(+). Involved in the regulation of the intracellular balance of NAD and NADP, and is a key enzyme in the biosynthesis of NADP. Catalyzes specifically the phosphorylation on 2'-hydroxyl of the adenosine moiety of NAD to yield NADP. The sequence is that of NAD kinase from Symbiobacterium thermophilum (strain DSM 24528 / JCM 14929 / IAM 14863 / T).